Consider the following 178-residue polypeptide: CASP-like protein 5B1 (178 aa).

Topologically, residues 1 to 37 are cytoplasmic; that stretch reads MDASNPIVHPIGDHHAVDLEEGPLIVTMKELPGMPGT. Residues 38 to 58 form a helical membrane-spanning segment; the sequence is IGGLALRVGQFLFAAAAIVIM. Over 59-69 the chain is Extracellular; sequence VTGDEFTNYTA. Asn66 carries an N-linked (GlcNAc...) asparagine glycan. Residues 70–90 traverse the membrane as a helical segment; the sequence is FCYLVAAMSLQFLWSFMLAIL. The Cytoplasmic portion of the chain corresponds to 91–104; the sequence is DTYALLIKRGLRNS. Residues 105-125 traverse the membrane as a helical segment; the sequence is VLLSLFVVGDWVTATLSLAAA. Residues 126–154 are Extracellular-facing; the sequence is CSTAGVTVLFDNDLNYCGQMHCHRYQLSA. Residues 155 to 175 traverse the membrane as a helical segment; that stretch reads AMAFLSWLLIGMSSLLTFWLW. The Cytoplasmic portion of the chain corresponds to 176 to 178; sequence ASE.

The protein belongs to the Casparian strip membrane proteins (CASP) family. Homodimer and heterodimers.

It is found in the cell membrane. This chain is CASP-like protein 5B1, found in Ginkgo biloba (Ginkgo).